The chain runs to 577 residues: MDLASKKNTANVGSKEIDPIKPKSPRSSLSPFSLKLGDNVPRNPHFDPKKMDPLVKHQPPKSLEPPPSTRGTNSEGDLKHNTYSSDGDSLAMRKNAPKNLHYDPKKIVPLTTSETYSPSARNHHHHRTKSPDKKRAPRHNGDYAYGDNLVGPSAQPFKPHTGGDVRWDAINSIASKGPQIGLDNFRLLKRLGYGDIGSVYLADLRGTNAVFAMKVMDKASLASRNKLLRAQTEREILSLLDHPFLPTLYSYFETDKFYCLVMEFCSGGNLHSLRQKQPSRRFTEEAARFYASEVLLALEYLHMLGVVYRDLKPENILVRDEGHIMLSDFDLSLRCTFNPTLVKSSSVCSGGGAILNEEFAVNGCMHPSAFLPRLLPSKKTRKAKSDSGLGGLSMPELMAEPTDVRSMSFVGTHEYLAPEIIRGEGHGSAVDWWTFGIFLYELLHGTTPFKGQGNRATLHNVVGQPLKFPDTPHVSSAARDLIRGLLVKDPHRRIAYTRGATEIKQHPFFEGVNWALVRSAAPPHIPDPVDLGPYAAARGKTKSHGGGDHCNSMKPEPLVACAAGPTDDTAYIDFEYF.

The span at 1-12 shows a compositional bias: polar residues; sequence MDLASKKNTANV. A disordered region spans residues 1 to 151; the sequence is MDLASKKNTA…DYAYGDNLVG (151 aa). Over residues 44 to 55 the composition is skewed to basic and acidic residues; sequence PHFDPKKMDPLV. Polar residues-rich tracts occupy residues 69–87 and 110–120; these read TRGT…SSDG and LTTSETYSPSA. The region spanning 185–509 is the Protein kinase domain; that stretch reads FRLLKRLGYG…ATEIKQHPFF (325 aa). ATP contacts are provided by residues 191 to 199 and lysine 214; that span reads LGYGDIGSV. Aspartate 310 acts as the Proton acceptor in catalysis. An AGC-kinase C-terminal domain is found at 510–577; sequence EGVNWALVRS…DTAYIDFEYF (68 aa).

Belongs to the protein kinase superfamily. AGC Ser/Thr protein kinase family. In terms of assembly, interacts with PDPK1/PDK1. In terms of processing, autophosphorylated and phosphorylated by PDPK1/PDK1. In terms of tissue distribution, specifically expressed in pollen grains.

The enzyme catalyses L-seryl-[protein] + ATP = O-phospho-L-seryl-[protein] + ADP + H(+). It catalyses the reaction L-threonyl-[protein] + ATP = O-phospho-L-threonyl-[protein] + ADP + H(+). Its activity is regulated as follows. Activated by PDPK1/PDK1. Functions redudantly with AGC1-7 as signaling component in the pollen tube. Required for polarized growth of pollen tubes. The polypeptide is Serine/threonine-protein kinase AGC1-5 (Arabidopsis thaliana (Mouse-ear cress)).